A 308-amino-acid polypeptide reads, in one-letter code: Adipolin (308 aa).

An N-terminal signal peptide occupies residues 1 to 21; it reads MWAWGWAAAALLWLQTAGAGA. Residues 36 to 119 are disordered; it reads DSPNITTSNR…PPGSPGVGVT (84 aa). Residue Asn39 is glycosylated (N-linked (GlcNAc...) asparagine). Basic residues predominate over residues 82–93; it reads RKRCRGRDKKSR. The span at 99 to 113 shows a compositional bias: pro residues; it reads PGPPGPPGPPGPPGS. Residues 153–308 enclose the C1q domain; the sequence is QRLVVEAFYC…SSFSGMLLGT (156 aa).

Belongs to the adipolin/erythroferrone family. In terms of assembly, homomultimer; disulfide-linked. Adipolin fC1QTNF12: homotrimer; disulfide-linked. Adipolin gC1QTNF12: homodimer; disulfide-linked. May interact with ERFE. Post-translationally, processed into Adipolin fC1QTNF12 and Adipolin gC1QTNF12 by FURIN. Insulin enhances endogenous C1QTNF12 cleavage. In terms of tissue distribution, widely expressed, with high expression in subcutaneous and epididymal white adipose tissues and brown adipose tissue. Expressed in adipocytes (at protein level).

Its subcellular location is the secreted. In terms of biological role, insulin-sensitizing adipocyte-secreted protein (adipokine) that regulates glucose metabolism in liver and adipose tissue. Promotes glucose uptake in adipocytes and suppresses de novo glucose production in hepatocytes via the PI3K-Akt signaling pathway. Administration lead to reduction of blood glucose. Able to attenuate inflammation in fat tissue. Its function is as follows. Acts by activating the Akt signaling in hepatocytes and adipocytes. Not able to increase insulin-stimulated glucose uptake in adipocytes. Functionally, acts by activating the MAP kinase. Increases insulin-stimulated glucose uptake in adipocytes. This is Adipolin (C1qtnf12) from Mus musculus (Mouse).